The primary structure comprises 299 residues: Light-independent protochlorophyllide reductase iron-sulfur ATP-binding protein (299 aa).

Residues 1–23 (MSPLDRTPPSLRGQDGEGSVQVH) are disordered. Residues 43 to 48 (GIGKST) and Lys-72 each bind ATP. Position 47 (Ser-47) interacts with Mg(2+). [4Fe-4S] cluster contacts are provided by Cys-128 and Cys-162. ATP-binding positions include 213–214 (NR) and 237–239 (PDL).

It belongs to the NifH/BchL/ChlL family. Homodimer. Protochlorophyllide reductase is composed of three subunits; BchL, BchN and BchB. [4Fe-4S] cluster is required as a cofactor.

It catalyses the reaction chlorophyllide a + oxidized 2[4Fe-4S]-[ferredoxin] + 2 ADP + 2 phosphate = protochlorophyllide a + reduced 2[4Fe-4S]-[ferredoxin] + 2 ATP + 2 H2O. Its pathway is porphyrin-containing compound metabolism; bacteriochlorophyll biosynthesis (light-independent). Its function is as follows. Component of the dark-operative protochlorophyllide reductase (DPOR) that uses Mg-ATP and reduced ferredoxin to reduce ring D of protochlorophyllide (Pchlide) to form chlorophyllide a (Chlide). This reaction is light-independent. The L component serves as a unique electron donor to the NB-component of the complex, and binds Mg-ATP. The sequence is that of Light-independent protochlorophyllide reductase iron-sulfur ATP-binding protein from Roseobacter denitrificans (strain ATCC 33942 / OCh 114) (Erythrobacter sp. (strain OCh 114)).